A 606-amino-acid chain; its full sequence is Pro-secreted protein ORF2 (606 aa).

The first 19 residues, Met-1–Gly-19, serve as a signal peptide directing secretion. The interval Thr-22–Pro-54 is disordered. A Nuclear localization signal motif is present at residues Arg-28–Arg-34. Residue Asn-255 is glycosylated (N-linked (GlcNAc...) asparagine; by host). The segment at Ile-313–Gln-339 is particle formation. Asn-510 carries an N-linked (GlcNAc...) asparagine; by host glycan.

It belongs to the hepevirus capsid protein family. As to quaternary structure, homodimer. Self-assembles to form the capsid. The capsid is dominated by dimers that define the 30 morphological units. Interacts with phosphorylated protein ORF3. N-glycosylated.

Its subcellular location is the secreted. It localises to the virion. It is found in the host cytoplasm. The protein resides in the host endoplasmic reticulum. The protein localises to the host Golgi apparatus. Its subcellular location is the host cell surface. It localises to the host nucleus. Plays a role in the inhibition of host antibody-mediated neutralization without blocking viral cell entry. Its function is as follows. Forms an icosahedral capsid with a T=1 symmetry and a 34 nm diameter. The capsid is composed of 60 copies linked to each other. Binds to the 5' end of the genomic RNA to mediate genome encapsidation. The chain is Pro-secreted protein ORF2 from Gallus gallus (Chicken).